The sequence spans 388 residues: Envelope protein F13 homolog (388 aa).

Gly2 carries N-myristoyl glycine; by host lipidation. Residues 310–337 form the PLD phosphodiesterase domain; it reads GDAINNTKLLVVDDEYVHVSNADIDGTH.

It is found in the virion membrane. Its subcellular location is the host endoplasmic reticulum membrane. Functionally, envelope protein associated with the inner side of the enveloped virion (EV) membrane. The polypeptide is Envelope protein F13 homolog (P43K) (Molluscum contagiosum virus subtype 2 (MOCV)).